The following is a 356-amino-acid chain: NADH-quinone oxidoreductase subunit H (356 aa).

8 consecutive transmembrane segments (helical) span residues 18-38 (IVMV…IAYI), 87-107 (GVFL…WAVI), 120-140 (VGIL…IMGG), 166-186 (IGFV…SAIV), 202-222 (WLTF…VFYV), 257-277 (LFML…AILF), 292-312 (WVPG…LIAM), and 333-353 (FLPL…FAGI).

The protein belongs to the complex I subunit 1 family. NDH-1 is composed of 14 different subunits. Subunits NuoA, H, J, K, L, M, N constitute the membrane sector of the complex.

The protein localises to the cell inner membrane. It catalyses the reaction a quinone + NADH + 5 H(+)(in) = a quinol + NAD(+) + 4 H(+)(out). Its function is as follows. NDH-1 shuttles electrons from NADH, via FMN and iron-sulfur (Fe-S) centers, to quinones in the respiratory chain. The immediate electron acceptor for the enzyme in this species is believed to be ubiquinone. Couples the redox reaction to proton translocation (for every two electrons transferred, four hydrogen ions are translocated across the cytoplasmic membrane), and thus conserves the redox energy in a proton gradient. This subunit may bind ubiquinone. This chain is NADH-quinone oxidoreductase subunit H, found in Nitrobacter winogradskyi (strain ATCC 25391 / DSM 10237 / CIP 104748 / NCIMB 11846 / Nb-255).